Here is a 327-residue protein sequence, read N- to C-terminus: ATP-dependent 6-phosphofructokinase (327 aa).

ATP is bound at residue G12. Residues 22–26 and 55–60 each bind ADP; these read RGVVR and RYSVSD. Residues 73–74 and 103–106 contribute to the ATP site; these read RF and GDGS. D104 lines the Mg(2+) pocket. 127-129 contributes to the substrate binding site; sequence TID. The Proton acceptor role is filled by D129. Residue R156 participates in ADP binding. Substrate-binding positions include R164 and 171 to 173; that span reads MGR. Residues 187–189, K213, and 215–217 each bind ADP; these read GCE and KKH. Substrate contacts are provided by residues E224, R245, and 251–254; that span reads HIQR.

Belongs to the phosphofructokinase type A (PFKA) family. ATP-dependent PFK group I subfamily. Prokaryotic clade 'B1' sub-subfamily. Homotetramer. Requires Mg(2+) as cofactor.

Its subcellular location is the cytoplasm. It catalyses the reaction beta-D-fructose 6-phosphate + ATP = beta-D-fructose 1,6-bisphosphate + ADP + H(+). It functions in the pathway carbohydrate degradation; glycolysis; D-glyceraldehyde 3-phosphate and glycerone phosphate from D-glucose: step 3/4. With respect to regulation, allosterically activated by ADP and other diphosphonucleosides, and allosterically inhibited by phosphoenolpyruvate. Functionally, catalyzes the phosphorylation of D-fructose 6-phosphate to fructose 1,6-bisphosphate by ATP, the first committing step of glycolysis. This Yersinia pseudotuberculosis serotype O:1b (strain IP 31758) protein is ATP-dependent 6-phosphofructokinase.